The chain runs to 107 residues: Transcription initiation factor IIA subunit 2-2 (107 aa).

The protein belongs to the TFIIA subunit 2 family. In terms of assembly, TFIIA is a heterodimer of the large unprocessed subunit 1 and a small subunit gamma. It was originally believed to be a heterotrimer of an alpha (p30), a beta (p20) and a gamma (p14) subunit.

The protein localises to the nucleus. TFIIA is a component of the transcription machinery of RNA polymerase II and plays an important role in transcriptional activation. TFIIA in a complex with TBP mediates transcriptional activity. This Drosophila melanogaster (Fruit fly) protein is Transcription initiation factor IIA subunit 2-2 (TfIIA-S-2).